The sequence spans 930 residues: Translation initiation factor IF-2 (930 aa).

Positions 50–67 are enriched in low complexity; it reads FKPAAAPKVEAKPAAPKV. Disordered regions lie at residues 50 to 196 and 260 to 346; these read FKPA…RIDF and EVVP…HELP. 2 stretches are compositionally biased toward basic and acidic residues: residues 68-90 and 110-125; these read SAEKKAEKSEPAKPAVAKEEAKP and FKAEREARAKEQAERR. The span at 129 to 141 shows a compositional bias: low complexity; that stretch reads KGNNRDQQQNGNR. 2 stretches are compositionally biased toward basic and acidic residues: residues 157–172 and 262–295; these read RDNRRFNDQAKKEQGQ and VPEKKEPAVDTRRKKQARPDKNRDDYDHEEDGPR. Residues 309 to 318 are compositionally biased toward low complexity; the sequence is NQKNSNWNNN. A compositionally biased stretch (basic and acidic residues) spans 337 to 346; it reads VTERKFHELP. In terms of domain architecture, tr-type G spans 432-599; sequence ERPPVVTIMG…TVLLVAEIQE (168 aa). Residues 441–448 are G1; sequence GHVDHGKT. 441-448 is a GTP binding site; that stretch reads GHVDHGKT. Residues 466 to 470 form a G2 region; it reads GITQH. The interval 487 to 490 is G3; the sequence is DTPG. Residues 487-491 and 541-544 contribute to the GTP site; these read DTPGH and NKID. The interval 541–544 is G4; the sequence is NKID. Positions 577–579 are G5; the sequence is SAK.

It belongs to the TRAFAC class translation factor GTPase superfamily. Classic translation factor GTPase family. IF-2 subfamily.

The protein resides in the cytoplasm. Its function is as follows. One of the essential components for the initiation of protein synthesis. Protects formylmethionyl-tRNA from spontaneous hydrolysis and promotes its binding to the 30S ribosomal subunits. Also involved in the hydrolysis of GTP during the formation of the 70S ribosomal complex. The chain is Translation initiation factor IF-2 from Streptococcus pneumoniae serotype 19F (strain G54).